The following is an 843-amino-acid chain: uncharacterized protein (843 aa).

The zn(2)-C6 fungal-type DNA-binding region spans Cys15 to Cys42.

The protein resides in the nucleus. In terms of biological role, required for growth on non-fermentable carbon sources. This is an uncharacterized protein from Saccharomyces cerevisiae (strain ATCC 204508 / S288c) (Baker's yeast).